The sequence spans 778 residues: Endonuclease MutS2 (778 aa).

ATP is bound at residue 332-339 (GPNTGGKT). The Smr domain occupies 703 to 778 (IDLRGKMVDE…GLGCTVVTLK (76 aa)).

This sequence belongs to the DNA mismatch repair MutS family. MutS2 subfamily. In terms of assembly, homodimer. Binds to stalled ribosomes, contacting rRNA.

Its function is as follows. Endonuclease that is involved in the suppression of homologous recombination and thus may have a key role in the control of bacterial genetic diversity. In terms of biological role, acts as a ribosome collision sensor, splitting the ribosome into its 2 subunits. Detects stalled/collided 70S ribosomes which it binds and splits by an ATP-hydrolysis driven conformational change. Acts upstream of the ribosome quality control system (RQC), a ribosome-associated complex that mediates the extraction of incompletely synthesized nascent chains from stalled ribosomes and their subsequent degradation. Probably generates substrates for RQC. In Fusobacterium nucleatum subsp. nucleatum (strain ATCC 25586 / DSM 15643 / BCRC 10681 / CIP 101130 / JCM 8532 / KCTC 2640 / LMG 13131 / VPI 4355), this protein is Endonuclease MutS2.